Consider the following 551-residue polypeptide: Thermophilic beta-amylase (551 aa).

A signal peptide spans 1–32 (MIGAFKRLGQKLFLTLLTASLIFASSIVTANA). D73 provides a ligand contact to substrate. Residue E80 participates in Ca(2+) binding. Residues H113 and D121 each contribute to the substrate site. E167 contacts Ca(2+). Catalysis depends on E195, which acts as the Proton donor. Substrate is bound by residues K310, H315, and T353. E392 acts as the Proton acceptor in catalysis. Substrate-binding positions include 393–394 (NA) and R423. The 104-residue stretch at 448–551 (LTPNGTIPVT…TGSVTITWQN (104 aa)) folds into the CBM20 domain.

This sequence belongs to the glycosyl hydrolase 14 family. In terms of assembly, monomer. The cofactor is Ca(2+).

It catalyses the reaction Hydrolysis of (1-&gt;4)-alpha-D-glucosidic linkages in polysaccharides so as to remove successive maltose units from the non-reducing ends of the chains.. This chain is Thermophilic beta-amylase, found in Thermoanaerobacterium thermosulfurigenes (Clostridium thermosulfurogenes).